The primary structure comprises 145 residues: tRNA-specific adenosine deaminase (145 aa).

In terms of domain architecture, CMP/dCMP-type deaminase spans 1-116 (MREALKQAEI…SNLRYFNSKA (116 aa)). His48 provides a ligand contact to Zn(2+). The active-site Proton donor is the Glu50. Zn(2+)-binding residues include Cys78 and Cys81.

Belongs to the cytidine and deoxycytidylate deaminase family. As to quaternary structure, homodimer. The cofactor is Zn(2+).

The catalysed reaction is adenosine(34) in tRNA + H2O + H(+) = inosine(34) in tRNA + NH4(+). In terms of biological role, catalyzes the deamination of adenosine to inosine at the wobble position 34 of tRNA(Arg2). The polypeptide is tRNA-specific adenosine deaminase (Rickettsia bellii (strain RML369-C)).